A 40-amino-acid polypeptide reads, in one-letter code: Dolichyl-diphosphooligosaccharide--protein glycosyltransferase subunit 4 (40 aa).

Over 1-4 the chain is Lumenal; the sequence is MITD. The chain crosses the membrane as a helical span at residues 5–25; it reads VQLAIFSNVLGVFLFLLVVAY. At 26–40 the chain is on the cytoplasmic side; the sequence is HYINANTGKSSIKNK.

This sequence belongs to the OST4 family. As to quaternary structure, component of the oligosaccharyltransferase (OST) complex.

Its subcellular location is the endoplasmic reticulum membrane. Its function is as follows. Subunit of the oligosaccharyl transferase (OST) complex that catalyzes the initial transfer of a defined glycan (Glc(3)Man(9)GlcNAc(2) in eukaryotes) from the lipid carrier dolichol-pyrophosphate to an asparagine residue within an Asn-X-Ser/Thr consensus motif in nascent polypeptide chains, the first step in protein N-glycosylation. N-glycosylation occurs cotranslationally and the complex associates with the Sec61 complex at the channel-forming translocon complex that mediates protein translocation across the endoplasmic reticulum (ER). All subunits are required for a maximal enzyme activity. The polypeptide is Dolichyl-diphosphooligosaccharide--protein glycosyltransferase subunit 4 (Drosophila mojavensis (Fruit fly)).